The chain runs to 277 residues: tRNA (guanine-N(7)-)-methyltransferase (277 aa).

A disordered region spans residues 1-37; sequence MAGTETGDAAGTEAPQPQKRYYRQRAHSNPMADHTLR. A Phosphoserine modification is found at S28. 6 residues coordinate S-adenosyl-L-methionine: G85, E108, R110, N141, A142, and L161. D164 is a catalytic residue. The tract at residues 165-173 is alphaC helix; sequence PHFKRTKHK. T239 and E241 together coordinate S-adenosyl-L-methionine. The interval 239–247 is alpha6 helix; the sequence is TEEGKKVLR.

Belongs to the class I-like SAM-binding methyltransferase superfamily. TrmB family. Catalytic component of the METTL1-WDR4 complex, composed of METTL1 and WDR4. In terms of processing, phosphorylation at Ser-28 by PKB/AKT1 inactivates its methyltransferase activity via a steric interference mechanism in the active site that locally disrupts the catalytic center. Phosphorylation at Ser-28 does not affect the interaction with WDR4.

The protein localises to the nucleus. It carries out the reaction guanosine(46) in tRNA + S-adenosyl-L-methionine = N(7)-methylguanosine(46) in tRNA + S-adenosyl-L-homocysteine. The catalysed reaction is a guanosine in mRNA + S-adenosyl-L-methionine = an N(7)-methylguanosine in mRNA + S-adenosyl-L-homocysteine. The enzyme catalyses a guanosine in miRNA + S-adenosyl-L-methionine = an N(7)-methylguanosine in miRNA + S-adenosyl-L-homocysteine. Its pathway is tRNA modification; N(7)-methylguanine-tRNA biosynthesis. Its function is as follows. Catalytic component of METTL1-WDR4 methyltransferase complex that mediates the formation of N(7)-methylguanine in a subset of RNA species, such as tRNAs, mRNAs and microRNAs (miRNAs). Catalyzes the formation of N(7)-methylguanine at position 46 (m7G46) in a large subset of tRNAs that contain the 5'-RAGGU-3' motif within the variable loop. M7G46 interacts with C13-G22 in the D-loop to stabilize tRNA tertiary structure and protect tRNAs from decay. Also acts as a methyltransferase for a subset of internal N(7)-methylguanine in mRNAs. Internal N(7)-methylguanine methylation of mRNAs in response to stress promotes their relocalization to stress granules, thereby suppressing their translation. Also methylates a specific subset of miRNAs, such as let-7. N(7)-methylguanine methylation of let-7 miRNA promotes let-7 miRNA processing by disrupting an inhibitory secondary structure within the primary miRNA transcript (pri-miRNA). Acts as a regulator of embryonic stem cell self-renewal and differentiation. The protein is tRNA (guanine-N(7)-)-methyltransferase of Bos taurus (Bovine).